The sequence spans 1024 residues: Error-prone DNA polymerase (1024 aa).

It belongs to the DNA polymerase type-C family. DnaE2 subfamily.

It localises to the cytoplasm. The catalysed reaction is DNA(n) + a 2'-deoxyribonucleoside 5'-triphosphate = DNA(n+1) + diphosphate. Its function is as follows. DNA polymerase involved in damage-induced mutagenesis and translesion synthesis (TLS). It is not the major replicative DNA polymerase. This is Error-prone DNA polymerase from Pseudomonas paraeruginosa (strain DSM 24068 / PA7) (Pseudomonas aeruginosa (strain PA7)).